A 455-amino-acid polypeptide reads, in one-letter code: Cysteinylglycine-S-conjugate dipeptidase (455 aa).

Residue histidine 92 participates in Zn(2+) binding. Residue aspartate 94 is part of the active site. Residue aspartate 125 coordinates Zn(2+). Glutamate 158 serves as the catalytic Proton acceptor. Positions 159, 163, and 428 each coordinate Zn(2+).

Belongs to the peptidase M20F family. The cofactor is Zn(2+).

The enzyme catalyses an S-substituted L-cysteinylglycine + H2O = an S-substituted L-cysteine + glycine. The catalysed reaction is S-(1-hydroxy-3-methylhexan-3-yl)-L-cysteinylglycine + H2O = S-(1-hydroxy-3-methylhexan-3-yl)-L-cysteine + glycine. It catalyses the reaction S-benzyl-L-cysteinylglycine + H2O = S-benzyl-L-cysteine + glycine. Metallopeptidase that hydrolyzes the Cys-Gly bond of Cys-Gly-S-conjugates. Involved in the formation of the human body odorant 3-methyl-3-sulfanylhexan-1-ol (3M3SH) from odorless axilla secretions. Catalyzes the hydrolysis of the Cys-Gly bond of the Cys-Gly-S-conjugate of 3M3SH, a key precursor secreted by apocrine glands in human axilla skin. The Cys-S-conjugate obtained is then cleaved by the Cys-S-conjugate beta-lyase MetC, which finally releases 3M3SH. The protein is Cysteinylglycine-S-conjugate dipeptidase of Corynebacterium striatum.